The chain runs to 470 residues: ATP synthase subunit beta (470 aa).

Residue 158 to 165 (GGAGVGKT) coordinates ATP.

This sequence belongs to the ATPase alpha/beta chains family. In terms of assembly, F-type ATPases have 2 components, CF(1) - the catalytic core - and CF(0) - the membrane proton channel. CF(1) has five subunits: alpha(3), beta(3), gamma(1), delta(1), epsilon(1). CF(0) has three main subunits: a(1), b(2) and c(9-12). The alpha and beta chains form an alternating ring which encloses part of the gamma chain. CF(1) is attached to CF(0) by a central stalk formed by the gamma and epsilon chains, while a peripheral stalk is formed by the delta and b chains.

The protein localises to the cell membrane. The enzyme catalyses ATP + H2O + 4 H(+)(in) = ADP + phosphate + 5 H(+)(out). In terms of biological role, produces ATP from ADP in the presence of a proton gradient across the membrane. The catalytic sites are hosted primarily by the beta subunits. This Alkalihalophilus pseudofirmus (strain ATCC BAA-2126 / JCM 17055 / OF4) (Bacillus pseudofirmus) protein is ATP synthase subunit beta.